Reading from the N-terminus, the 121-residue chain is Small ribosomal subunit protein uS13 (121 aa).

Residues 96 to 121 are disordered; sequence PVRGQNTKNNARTRKGKAVAIAGKKK. A compositionally biased stretch (basic residues) spans 106-121; the sequence is ARTRKGKAVAIAGKKK.

It belongs to the universal ribosomal protein uS13 family. As to quaternary structure, part of the 30S ribosomal subunit. Forms a loose heterodimer with protein S19. Forms two bridges to the 50S subunit in the 70S ribosome.

Functionally, located at the top of the head of the 30S subunit, it contacts several helices of the 16S rRNA. In the 70S ribosome it contacts the 23S rRNA (bridge B1a) and protein L5 of the 50S subunit (bridge B1b), connecting the 2 subunits; these bridges are implicated in subunit movement. Contacts the tRNAs in the A and P-sites. The protein is Small ribosomal subunit protein uS13 of Streptococcus pneumoniae serotype 4 (strain ATCC BAA-334 / TIGR4).